A 367-amino-acid polypeptide reads, in one-letter code: tRNA 2-selenouridine synthase (367 aa).

In terms of domain architecture, Rhodanese spans 12–136 (FLNDRPLMDA…LRGFLIDTLE (125 aa)). C95 functions as the S-selanylcysteine intermediate in the catalytic mechanism.

The protein belongs to the SelU family. Monomer.

The enzyme catalyses 5-methylaminomethyl-2-thiouridine(34) in tRNA + selenophosphate + (2E)-geranyl diphosphate + H2O + H(+) = 5-methylaminomethyl-2-selenouridine(34) in tRNA + (2E)-thiogeraniol + phosphate + diphosphate. It catalyses the reaction 5-methylaminomethyl-2-thiouridine(34) in tRNA + (2E)-geranyl diphosphate = 5-methylaminomethyl-S-(2E)-geranyl-thiouridine(34) in tRNA + diphosphate. The catalysed reaction is 5-methylaminomethyl-S-(2E)-geranyl-thiouridine(34) in tRNA + selenophosphate + H(+) = 5-methylaminomethyl-2-(Se-phospho)selenouridine(34) in tRNA + (2E)-thiogeraniol. It carries out the reaction 5-methylaminomethyl-2-(Se-phospho)selenouridine(34) in tRNA + H2O = 5-methylaminomethyl-2-selenouridine(34) in tRNA + phosphate. In terms of biological role, involved in the post-transcriptional modification of the uridine at the wobble position (U34) of tRNA(Lys), tRNA(Glu) and tRNA(Gln). Catalyzes the conversion of 2-thiouridine (S2U-RNA) to 2-selenouridine (Se2U-RNA). Acts in a two-step process involving geranylation of 2-thiouridine (S2U) to S-geranyl-2-thiouridine (geS2U) and subsequent selenation of the latter derivative to 2-selenouridine (Se2U) in the tRNA chain. The polypeptide is tRNA 2-selenouridine synthase (Pseudomonas fluorescens (strain Pf0-1)).